A 63-amino-acid chain; its full sequence is UPF0512 protein X (63 aa).

Belongs to the UPF0512 family.

The polypeptide is UPF0512 protein X (Dictyostelium discoideum (Social amoeba)).